Here is a 504-residue protein sequence, read N- to C-terminus: Hexose transporter 1 (504 aa).

Residues 1–29 (MTKSSKDICSENEGKKNGKSGFFSTSFKY) are Cytoplasmic-facing. Residues 30 to 50 (VLSACIASFIFGYQVSVLNTI) traverse the membrane as a helical segment. Residues 51-78 (KNFIVVEFEWCKGEKDRLNCSNNTIQSS) lie on the Extracellular side of the membrane. C61 and C70 are joined by a disulfide. Residues 79-99 (FLLASVFIGAVLGCGFSGYLV) traverse the membrane as a helical segment. Over 100 to 104 (QFGRR) the chain is Cytoplasmic. Residues 105 to 125 (LSLLIIYNFFFLVSILTSITH) traverse the membrane as a helical segment. At 126 to 129 (HFHT) the chain is on the extracellular side. The helical transmembrane segment at 130 to 150 (ILFARLLSGFGIGLVTVSVPM) threads the bilayer. The Cytoplasmic portion of the chain corresponds to 151–165 (YISEMTHKDKKGAYG). The helical transmembrane segment at 166-186 (VMHQLFITFGIFVAVMLGLAM) threads the bilayer. Residue Q169 coordinates alpha-D-glucose. Residue Q169 coordinates beta-D-glucose. The Extracellular portion of the chain corresponds to 187–207 (GEGPKADSTEPLTSFAKLWWR). A helical transmembrane segment spans residues 208–228 (LMFLFPSVISLIGILALVVFF). The Cytoplasmic segment spans residues 229-293 (KEETPYFLFE…SALKIPSYRY (65 aa)). The helical transmembrane segment at 294-314 (VIILGCLLSGLQQFTGINVLV) threads the bilayer. Residues Q305, Q306, and N311 each contribute to the alpha-D-glucose site. Q305 contacts beta-D-glucose. Residue N311 participates in beta-D-glucose binding. At 315–331 (SNSNELYKEFLDSHLIT) the chain is on the extracellular side. Residues 332–352 (ILSVVMTAVNFLMTFPAIYIV) traverse the membrane as a helical segment. Residue N341 coordinates beta-D-glucose. The Cytoplasmic segment spans residues 353 to 358 (EKLGRK). The chain crosses the membrane as a helical span at residues 359 to 379 (TLLLWGCVGVLVAYLPTAIAN). The Extracellular portion of the chain corresponds to 380 to 392 (EINRNSNFVKILS). Residues 393–413 (IVATFVMIISFAVSYGPVLWI) form a helical membrane-spanning segment. Residue W412 participates in alpha-D-glucose binding. Topologically, residues 414-429 (YLHEMFPSEIKDSAAS) are cytoplasmic. A helical transmembrane segment spans residues 430-450 (LASLVNWVCAIIVVFPSDIII). Over 451–455 (KKSPS) the chain is Extracellular. Residues 456-476 (ILFIVFSVMSILTFFFIFFFI) traverse the membrane as a helical segment. At 477–504 (KETKGGEIGTSPYITMEERQKHMTKSVV) the chain is on the cytoplasmic side.

This sequence belongs to the major facilitator superfamily. Sugar transporter (TC 2.A.1.1) family. In terms of assembly, homodimer.

It is found in the cell membrane. The catalysed reaction is D-glucose(out) = D-glucose(in). It catalyses the reaction D-fructose(out) = D-fructose(in). It carries out the reaction D-galactose(in) = D-galactose(out). The enzyme catalyses D-mannose(out) = D-mannose(in). The catalysed reaction is D-glucosamine(out) = D-glucosamine(in). It catalyses the reaction D-xylose(out) = D-xylose(in). With respect to regulation, inhibited by cytochalasin B. Inhibited by compound 3361 (3-O-((undec-10-en)-1-yl)-D-glucose). Inhibited by compound HTI-1. Its function is as follows. Sodium-independent facilitative hexose transporter. Can transport D-glucose and D-fructose. Can transport D-mannose, D-galactose, D-xylose and D-glucosamine. In Plasmodium falciparum (isolate 3D7), this protein is Hexose transporter 1.